The primary structure comprises 241 residues: Chaperone protein HifB (241 aa).

The first 27 residues, 1–27 (MGKTMFKKTLLFFTALFFAALCAFSAN), serve as a signal peptide directing secretion.

This sequence belongs to the periplasmic pilus chaperone family.

The protein localises to the periplasm. Mediates assembly of pili by forming soluble multimeric complexes with pili subunits as an intermediate step in the assembly process. This protein is involved in type B pili (HifA) assembly. The protein is Chaperone protein HifB (hifB) of Haemophilus influenzae.